The sequence spans 310 residues: Hydroxyacylglutathione hydrolase, mitochondrial (310 aa).

The Zn(2+) site is built by His-104, His-106, Asp-108, His-109, His-160, and Asp-184. Substrate-binding positions include 193-195, 223-225, and 299-302; these read KFF, HEY, and RKEK. Zn(2+) is bound at residue His-223.

Belongs to the metallo-beta-lactamase superfamily. Glyoxalase II family. As to quaternary structure, monomer. It depends on Zn(2+) as a cofactor.

Its subcellular location is the mitochondrion matrix. The protein localises to the cytoplasm. It carries out the reaction an S-(2-hydroxyacyl)glutathione + H2O = a 2-hydroxy carboxylate + glutathione + H(+). The enzyme catalyses (R)-S-lactoylglutathione + H2O = (R)-lactate + glutathione + H(+). Functionally, thiolesterase that catalyzes the hydrolysis of S-D-lactoyl-glutathione to form glutathione and D-lactic acid. The protein is Hydroxyacylglutathione hydrolase, mitochondrial (HAGH) of Gallus gallus (Chicken).